The chain runs to 507 residues: Histidine ammonia-lyase (507 aa).

The segment at residues 141 to 143 (ASG) is a cross-link (5-imidazolinone (Ala-Gly)). Position 142 is a 2,3-didehydroalanine (Ser) (Ser-142).

Belongs to the PAL/histidase family. Post-translationally, contains an active site 4-methylidene-imidazol-5-one (MIO), which is formed autocatalytically by cyclization and dehydration of residues Ala-Ser-Gly.

Its subcellular location is the cytoplasm. It carries out the reaction L-histidine = trans-urocanate + NH4(+). The protein operates within amino-acid degradation; L-histidine degradation into L-glutamate; N-formimidoyl-L-glutamate from L-histidine: step 1/3. The protein is Histidine ammonia-lyase of Burkholderia ambifaria (strain ATCC BAA-244 / DSM 16087 / CCUG 44356 / LMG 19182 / AMMD) (Burkholderia cepacia (strain AMMD)).